Reading from the N-terminus, the 229-residue chain is ATP synthase subunit a (229 aa).

Transmembrane regions (helical) follow at residues 25-45 (ADAI…SLIA), 86-106 (IATL…PGFF), 111-131 (NLNT…IVGI), 142-162 (FMGP…IGHL), 181-201 (LVLM…MMLM), and 202-222 (GVLV…IYIQ).

It belongs to the ATPase A chain family. F-type ATPases have 2 components, CF(1) - the catalytic core - and CF(0) - the membrane proton channel. CF(1) has five subunits: alpha(3), beta(3), gamma(1), delta(1), epsilon(1). CF(0) has three main subunits: a(1), b(2) and c(9-12). The alpha and beta chains form an alternating ring which encloses part of the gamma chain. CF(1) is attached to CF(0) by a central stalk formed by the gamma and epsilon chains, while a peripheral stalk is formed by the delta and b chains.

The protein resides in the cell inner membrane. Its function is as follows. Key component of the proton channel; it plays a direct role in the translocation of protons across the membrane. The chain is ATP synthase subunit a from Geobacter sulfurreducens (strain ATCC 51573 / DSM 12127 / PCA).